The following is a 278-amino-acid chain: Undecaprenyl-diphosphatase 1 (278 aa).

7 consecutive transmembrane segments (helical) span residues V46–F66, Y91–A111, L119–A139, S153–F173, V191–Y211, P225–L245, and F256–I276.

This sequence belongs to the UppP family.

The protein resides in the cell membrane. It catalyses the reaction di-trans,octa-cis-undecaprenyl diphosphate + H2O = di-trans,octa-cis-undecaprenyl phosphate + phosphate + H(+). Catalyzes the dephosphorylation of undecaprenyl diphosphate (UPP). Confers resistance to bacitracin. This chain is Undecaprenyl-diphosphatase 1, found in Frankia alni (strain DSM 45986 / CECT 9034 / ACN14a).